Consider the following 128-residue polypeptide: Aspartate 1-decarboxylase (128 aa).

Serine 25 acts as the Schiff-base intermediate with substrate; via pyruvic acid in catalysis. Serine 25 is subject to Pyruvic acid (Ser). Substrate is bound at residue threonine 57. Catalysis depends on tyrosine 58, which acts as the Proton donor. 73-75 serves as a coordination point for substrate; that stretch reads GSA.

Belongs to the PanD family. As to quaternary structure, heterooctamer of four alpha and four beta subunits. Pyruvate is required as a cofactor. Is synthesized initially as an inactive proenzyme, which is activated by self-cleavage at a specific serine bond to produce a beta-subunit with a hydroxyl group at its C-terminus and an alpha-subunit with a pyruvoyl group at its N-terminus.

It is found in the cytoplasm. The catalysed reaction is L-aspartate + H(+) = beta-alanine + CO2. Its pathway is cofactor biosynthesis; (R)-pantothenate biosynthesis; beta-alanine from L-aspartate: step 1/1. Functionally, catalyzes the pyruvoyl-dependent decarboxylation of aspartate to produce beta-alanine. In Burkholderia mallei (strain NCTC 10247), this protein is Aspartate 1-decarboxylase.